A 128-amino-acid polypeptide reads, in one-letter code: Ribosome-binding factor A (128 aa).

Belongs to the RbfA family. Monomer. Binds 30S ribosomal subunits, but not 50S ribosomal subunits or 70S ribosomes.

It localises to the cytoplasm. In terms of biological role, one of several proteins that assist in the late maturation steps of the functional core of the 30S ribosomal subunit. Associates with free 30S ribosomal subunits (but not with 30S subunits that are part of 70S ribosomes or polysomes). Required for efficient processing of 16S rRNA. May interact with the 5'-terminal helix region of 16S rRNA. In Rippkaea orientalis (strain PCC 8801 / RF-1) (Cyanothece sp. (strain PCC 8801)), this protein is Ribosome-binding factor A.